The sequence spans 762 residues: ABC-type oligopeptide transporter ABCB9 (762 aa).

The next 8 membrane-spanning stretches (helical) occupy residues 7-27 (VVVT…IYAF), 47-67 (VLDL…ATIG), 84-104 (LVIT…LLLF), 116-136 (FWAL…LWGL), 181-201 (VAFL…ETFL), 221-241 (FTTA…AAGI), 315-335 (VFMF…FPII), and 412-432 (SGLT…HLVI). An ABC transmembrane type-1 domain is found at 184-467 (LVAASFFLIV…VGSVYSGLMQ (284 aa)). Residues 500–736 (VDFENVTFTY…GGLYAKLVQR (237 aa)) form the ABC transporter domain. Position 535-542 (535-542 (GPSGSGKS)) interacts with ATP.

It belongs to the ABC transporter superfamily. ABCB family. MHC peptide exporter (TC 3.A.1.209) subfamily. Homodimer. Interacts (via TMD0 region) with LAMP1; this interaction strongly stabilizes ABCB9 and protects ABCB9 against lysosomal degradation. Interacts (via TMD0 region) with LAMP2 (isoform LAMP-2B). Interacts (via TMD0) with YIF1B; this interaction allows (but is not essential) the ER-to-Golgi trafficking and strongly depends on a salt bridge within TMD0. Found in testis, particularly in the Sertoli cells of the seminiferous tubules. Also expressed in kidney, brain, heart, lung, spleen, thymus, intestine and testis. Higher expression detected in brain and testis than in thymus and intestine.

Its subcellular location is the lysosome membrane. The catalysed reaction is a [oligopeptide](in) + ATP + H2O = a [oligopeptide](out) + ADP + phosphate + H(+). Functionally, ATP-dependent low-affinity peptide transporter which translocates a broad spectrum of peptides from the cytosol to the lysosomal lumen for degradation. Displays a broad peptide length specificity from 6-mer up to at least 59-mer peptides with an optimum of 23-mers. Binds and transports smaller and larger peptides with the same affinity. Favors positively charged, aromatic or hydrophobic residues in the N- and C-terminal positions whereas negatively charged residues as well as asparagine and methionine are not favored. The polypeptide is ABC-type oligopeptide transporter ABCB9 (Rattus norvegicus (Rat)).